We begin with the raw amino-acid sequence, 476 residues long: Bifunctional protein HldE (476 aa).

The segment at 1–319 (MKVTLPAFEK…GALASHQGES (319 aa)) is ribokinase. 195-198 (NMSE) serves as a coordination point for ATP. Residue Asp-264 is part of the active site. The tract at residues 345 to 476 (MTNGCFDILH…SIIQNIMARQ (132 aa)) is cytidylyltransferase.

This sequence in the N-terminal section; belongs to the carbohydrate kinase PfkB family. It in the C-terminal section; belongs to the cytidylyltransferase family. As to quaternary structure, homodimer.

It catalyses the reaction D-glycero-beta-D-manno-heptose 7-phosphate + ATP = D-glycero-beta-D-manno-heptose 1,7-bisphosphate + ADP + H(+). The catalysed reaction is D-glycero-beta-D-manno-heptose 1-phosphate + ATP + H(+) = ADP-D-glycero-beta-D-manno-heptose + diphosphate. Its pathway is nucleotide-sugar biosynthesis; ADP-L-glycero-beta-D-manno-heptose biosynthesis; ADP-L-glycero-beta-D-manno-heptose from D-glycero-beta-D-manno-heptose 7-phosphate: step 1/4. It functions in the pathway nucleotide-sugar biosynthesis; ADP-L-glycero-beta-D-manno-heptose biosynthesis; ADP-L-glycero-beta-D-manno-heptose from D-glycero-beta-D-manno-heptose 7-phosphate: step 3/4. Functionally, catalyzes the phosphorylation of D-glycero-D-manno-heptose 7-phosphate at the C-1 position to selectively form D-glycero-beta-D-manno-heptose-1,7-bisphosphate. Catalyzes the ADP transfer from ATP to D-glycero-beta-D-manno-heptose 1-phosphate, yielding ADP-D-glycero-beta-D-manno-heptose. This chain is Bifunctional protein HldE, found in Shewanella denitrificans (strain OS217 / ATCC BAA-1090 / DSM 15013).